The following is a 501-amino-acid chain: Putative lon protease homolog (501 aa).

Residue 53–60 participates in ATP binding; the sequence is GPPGIGKS. The span at 481–494 shows a compositional bias: polar residues; that stretch reads SSSQRMSQHGYSSE. The interval 481–501 is disordered; the sequence is SSSQRMSQHGYSSENIDRSYM.

This sequence belongs to the peptidase S16 family.

The chain is Putative lon protease homolog from Methanothermobacter thermautotrophicus (strain ATCC 29096 / DSM 1053 / JCM 10044 / NBRC 100330 / Delta H) (Methanobacterium thermoautotrophicum).